We begin with the raw amino-acid sequence, 241 residues long: Phosphoribosylformylglycinamidine synthase subunit PurQ (241 aa).

In terms of domain architecture, Glutamine amidotransferase type-1 spans 6 to 241 (NVGIVVFPGS…QSLLLASAFA (236 aa)). Cysteine 90 functions as the Nucleophile in the catalytic mechanism. Catalysis depends on residues histidine 207 and glutamate 209.

In terms of assembly, part of the FGAM synthase complex composed of 1 PurL, 1 PurQ and 2 PurS subunits.

The protein localises to the cytoplasm. It carries out the reaction N(2)-formyl-N(1)-(5-phospho-beta-D-ribosyl)glycinamide + L-glutamine + ATP + H2O = 2-formamido-N(1)-(5-O-phospho-beta-D-ribosyl)acetamidine + L-glutamate + ADP + phosphate + H(+). It catalyses the reaction L-glutamine + H2O = L-glutamate + NH4(+). Its pathway is purine metabolism; IMP biosynthesis via de novo pathway; 5-amino-1-(5-phospho-D-ribosyl)imidazole from N(2)-formyl-N(1)-(5-phospho-D-ribosyl)glycinamide: step 1/2. Part of the phosphoribosylformylglycinamidine synthase complex involved in the purines biosynthetic pathway. Catalyzes the ATP-dependent conversion of formylglycinamide ribonucleotide (FGAR) and glutamine to yield formylglycinamidine ribonucleotide (FGAM) and glutamate. The FGAM synthase complex is composed of three subunits. PurQ produces an ammonia molecule by converting glutamine to glutamate. PurL transfers the ammonia molecule to FGAR to form FGAM in an ATP-dependent manner. PurS interacts with PurQ and PurL and is thought to assist in the transfer of the ammonia molecule from PurQ to PurL. The sequence is that of Phosphoribosylformylglycinamidine synthase subunit PurQ from Thermosynechococcus vestitus (strain NIES-2133 / IAM M-273 / BP-1).